Reading from the N-terminus, the 390-residue chain is Putative glutamate--cysteine ligase 2 (390 aa).

Belongs to the glutamate--cysteine ligase type 2 family. YbdK subfamily.

The enzyme catalyses L-cysteine + L-glutamate + ATP = gamma-L-glutamyl-L-cysteine + ADP + phosphate + H(+). Its function is as follows. ATP-dependent carboxylate-amine ligase which exhibits weak glutamate--cysteine ligase activity. This chain is Putative glutamate--cysteine ligase 2, found in Chloroflexus aggregans (strain MD-66 / DSM 9485).